Reading from the N-terminus, the 71-residue chain is Protein SlyX homolog (71 aa).

The protein belongs to the SlyX family.

This chain is Protein SlyX homolog, found in Rhodopseudomonas palustris (strain BisB5).